Here is a 300-residue protein sequence, read N- to C-terminus: Probable amino-acid ABC transporter periplasmic-binding protein y4tE (300 aa).

The signal sequence occupies residues 1–27; that stretch reads MTHLKISKTAPAVARFLPAGRIASVAA.

Belongs to the bacterial solute-binding protein 3 family.

The protein localises to the periplasm. Functionally, probably part of the binding-protein-dependent transport system y4tEFGH for an amino acid. The chain is Probable amino-acid ABC transporter periplasmic-binding protein y4tE from Sinorhizobium fredii (strain NBRC 101917 / NGR234).